Reading from the N-terminus, the 493-residue chain is Probable cytosol aminopeptidase (493 aa).

The Mn(2+) site is built by Lys257 and Asp262. The active site involves Lys269. Residues Asp281, Asp341, and Glu343 each contribute to the Mn(2+) site. Residue Arg345 is part of the active site.

It belongs to the peptidase M17 family. Mn(2+) serves as cofactor.

It localises to the cytoplasm. It catalyses the reaction Release of an N-terminal amino acid, Xaa-|-Yaa-, in which Xaa is preferably Leu, but may be other amino acids including Pro although not Arg or Lys, and Yaa may be Pro. Amino acid amides and methyl esters are also readily hydrolyzed, but rates on arylamides are exceedingly low.. The catalysed reaction is Release of an N-terminal amino acid, preferentially leucine, but not glutamic or aspartic acids.. Presumably involved in the processing and regular turnover of intracellular proteins. Catalyzes the removal of unsubstituted N-terminal amino acids from various peptides. The polypeptide is Probable cytosol aminopeptidase (Synechococcus sp. (strain WH7803)).